Reading from the N-terminus, the 579-residue chain is Glypican-3 (579 aa).

The N-terminal stretch at 1–24 is a signal peptide; that stretch reads MAGTVRTACLLVAMLLGLGCLGQA. A Pyrrolidone carboxylic acid modification is found at Gln25. 7 cysteine pairs are disulfide-bonded: Cys34-Cys71, Cys64-Cys261, Cys72-Cys264, Cys196-Cys348, Cys251-Cys284, Cys273-Cys421, and Cys277-Cys409. 2 N-linked (GlcNAc...) asparagine glycosylation sites follow: Asn123 and Asn240. Ser351 is subject to Phosphoserine. Asn417 carries an N-linked (GlcNAc...) asparagine glycan. 2 O-linked (Xyl...) (glycosaminoglycan) serine glycosylation sites follow: Ser494 and Ser508. The segment at 533–552 is disordered; it reads DAPGNKQHGNQKDNEITTSH. The GPI-anchor amidated serine moiety is linked to residue Ser553. Residues 554–579 constitute a propeptide, removed in mature form; it reads VGNMPSPLKILISVAIYVACFFFLVH.

The protein belongs to the glypican family. As to quaternary structure, heterodimer; disulfide-linked. Cleavage by a furin-like convertase results in production of alpha and beta chains which form a disulfide-linked heterodimer. Interacts with DPP4. Interacts with FGF2. Interacts with WNT5A. Also interacts with WNT3A and WNT7B. Interacts with hedgehog protein SHH; the heparan sulfate chains are not required for the interaction. Also interacts with hedgehog protein IHH. Interacts with CD81. Interacts with Wnt receptors FZD4, FZD7 and FZD8; the heparan sulfate chains are required for the interaction. Post-translationally, O-glycosylated; contains heparan sulfate and/or chondroitin sulfate. In terms of processing, cleaved intracellularly by a furin-like convertase to generate 2 subunits, alpha and beta, which remain associated through disulfide bonds and are associated with the cell surface via the GPI-anchor. This processing is essential for its role in inhibition of hedgehog signaling. A second proteolytic event may result in cleavage of the protein on the cell surface, separating it from the GPI-anchor and leading to its shedding from the cell surface. In the developing limb, absent from the apical epidermal ridge at 11 dpc but highly expressed in the underlying mesenchyme. Expression in the mesenchyme at this stage is asymmetric with highest levels in the regions of the distal mesenchyme within the progress zone and within the proximal anterior and posterior limb bud. At later developmental stages including 12.5 and 13.5 dpc, expression is restricted to the interdigital webs and the regions of chondrocytic differentiation of the developing bones. In the embryonic kidney, expressed in both the ureteric bud and mesenchymal cells as early as 13.5 dpc. Expression at 16.5 dpc is similar to that at 13.5 dpc but decreases by 18.5 dpc.

It localises to the cell membrane. In terms of biological role, cell surface proteoglycan. Negatively regulates the hedgehog signaling pathway when attached via the GPI-anchor to the cell surface by competing with the hedgehog receptor PTC1 for binding to hedgehog proteins. Binding to the hedgehog protein SHH triggers internalization of the complex by endocytosis and its subsequent lysosomal degradation. Positively regulates the canonical Wnt signaling pathway by binding to the Wnt receptor Frizzled and stimulating the binding of the Frizzled receptor to Wnt ligands. Positively regulates the non-canonical Wnt signaling pathway. Binds to CD81 which decreases the availability of free CD81 for binding to the transcriptional repressor HHEX, resulting in nuclear translocation of HHEX and transcriptional repression. Inhibits the dipeptidyl peptidase activity of DPP4. Plays a role in limb patterning and skeletal development by controlling the cellular response to BMP4. Modulates the effects of growth factors BMP2, BMP7 and FGF7 on renal branching morphogenesis. Required for coronary vascular development. Plays a role in regulating cell movements during gastrulation. The chain is Glypican-3 (Gpc3) from Mus musculus (Mouse).